The chain runs to 596 residues: MAITHYQMASFQSSFHFCMLRKTLRQKSSLHFAKRCEATNKIFQTHGSVAIYQKTLWTHDLIDGLETDFLINRKEKVNELEVNVARMFMDYENGDISNLELLELIDNIERLGLGHRFQTNMKRVLDKIATVNENSLGLKEEEEEEEEEEDNLHALSLKFRILRQSGYRVSQDFQRKFKESRGGLTGGLKELLSIYEASYLSLEGEPDLHEAKLFATEKLLKLTGHENEAMKDHVNHALDIPLYRRMLRLEARWYIDAYGKRKDANKQLLELAILDFNIVQSAHKRDLQEVSKWWEKTGLVRKLDFIRDRLMECFFWSVGMVFEPQYYTCRVELTKIATLITTIDDIYDVYGSLNELKVFTHAVKRWDINAVENMPEYLQLGFLALYNTINEMGYETLSAQGINIIPNLARVWGELLEAFLVEAEWTHNNYMPTFKDYLDNAWRSVSGMVLLTHGYFLMNQDVKDDAIESLENFHDLFKWSSMLFRLYNDLAALADEIDKDKSPNAISCYMYEHSVSEEVAREHVKTLIDKAWMKMIEARIACSEHMTDPLIDMAINLARVSSCMYQYGDGIKDPEARTKDRVMSIIIKPFDTSEIP.

Residues 1 to 35 (MAITHYQMASFQSSFHFCMLRKTLRQKSSLHFAKR) constitute a chloroplast transit peptide. 5 residues coordinate (2E)-geranyl diphosphate: Arg307, Asp344, Asp348, Arg485, and Asn488. Asp344 and Asp348 together coordinate Mg(2+). The DDXXD motif motif lies at 344-348 (DDIYD). Residues Asn488, Ala492, and Glu496 each contribute to the Mg(2+) site.

It belongs to the terpene synthase family. Tpsb subfamily. Mg(2+) is required as a cofactor. Requires Mn(2+) as cofactor. Highly expressed in leaves, stems and disk florets. Detected in roots.

The protein resides in the plastid. Its subcellular location is the chloroplast. The enzyme catalyses (2E)-geranyl diphosphate = (E)-beta-ocimene + diphosphate. It functions in the pathway secondary metabolite biosynthesis; terpenoid biosynthesis. Monoterpene synthase involved in the biosynthesis of (E)-beta-ocimene as the major product and trace amounts of (Z)-beta-ocimene. Can only accept geranyl diphosphate as substrate. This Matricaria chamomilla var. recutita (German chamomile) protein is (E)-beta-ocimene synthase, chloroplastic.